The sequence spans 483 residues: MQPISPGAAVLVVGAGITGRAVLAALAPLGARATLTDDSPTALTASAQQRVEVLDPATAVDRIADFDLVVVSPGIPPTAPIPVAAAAAGIPVWGDVELAWHLDRSGRFGPPRQWLVVTGTNGKTTTTSMLYAMLQAGGRRAVLCGNIGDPVLSQLDRPADVLAVELSSFQLHWAPSLRPEAGAVLNVAEDHLDWHGSMAAYAGDKARALTGRVAVGGLDDAIAAGLLADAPAPVKVGFRLGDPGPGEFGVRDGVLIDNAFGRDLALADADTIPVAGPVGVLDALAAAALARAVDVPAAAIAEALATFHVGRHRAEVVAVADGITYVDDSKATNPHAAQASVSAFPRVVWVAGGLLKGASVDEMVEATKDRLVGVVLIGRDRAIVGNALSRHAPDVPVVELVTGEDSVVLEKDESGVTRVTRVIQTGDRTLADAVMTAAVDAARGLATSGDTVLLAPAGASFDQFTGYGHRGDAFAAAVRAAIR.

An ATP-binding site is contributed by 119 to 125 (GTNGKTT).

The protein belongs to the MurCDEF family.

The protein localises to the cytoplasm. It carries out the reaction UDP-N-acetyl-alpha-D-muramoyl-L-alanine + D-glutamate + ATP = UDP-N-acetyl-alpha-D-muramoyl-L-alanyl-D-glutamate + ADP + phosphate + H(+). The protein operates within cell wall biogenesis; peptidoglycan biosynthesis. Cell wall formation. Catalyzes the addition of glutamate to the nucleotide precursor UDP-N-acetylmuramoyl-L-alanine (UMA). The sequence is that of UDP-N-acetylmuramoylalanine--D-glutamate ligase from Mycolicibacterium vanbaalenii (strain DSM 7251 / JCM 13017 / BCRC 16820 / KCTC 9966 / NRRL B-24157 / PYR-1) (Mycobacterium vanbaalenii).